The sequence spans 150 residues: C-type lectin mosGCTL-7 (150 aa).

The N-terminal stretch at methionine 1–alanine 17 is a signal peptide. Positions lysine 18–cysteine 140 constitute a C-type lectin domain. Asparagine 67 carries N-linked (GlcNAc...) asparagine glycosylation. The cysteines at positions 111 and 131 are disulfide-linked.

In terms of assembly, interacts with putative receptor-type tyrosine-protein phosphatase mosPTP-1; the interaction probably mediates the recruitment of Japanese encephalitis virus particles in complex with C-type lectin mosGCTL-7 to the cell surface. (Microbial infection) Interacts with envelope protein E (glycosylated) of Japanese encephalitis virus in a calcium-dependent manner.

It localises to the secreted. Its function is as follows. Carbohydrate-binding protein. Functionally, (Microbial infection) Facilitates Japanese encephalitis virus infection in mosquitoes probably via capturing viral particles and presenting them to a ligand on the cell surface, thereby facilitating viral entry. This Aedes aegypti (Yellowfever mosquito) protein is C-type lectin mosGCTL-7.